The chain runs to 1357 residues: Protein CFT1 (1357 aa).

Residues 445–465 (TREAHNPSSGTNSLMDINDDD) form a disordered region. The segment covering 450–459 (NPSSGTNSLM) has biased composition (polar residues).

The protein belongs to the CFT1 family. As to quaternary structure, component of the cleavage and polyadenylation factor (CPF) complex, which is composed of at least PTI1, SYC1, SSU72, GLC7, MPE1, REF2, PFS2, PTA1, YSH1/BRR5, SWD2, CFT2/YDH1, YTH1, CFT1/YHH1, FIP1 and PAP1. Interacts with the phosphorylated CTD domain of RPB1/RNA polymerase II.

It is found in the nucleus. RNA-binding component of the cleavage and polyadenylation factor (CPF) complex, which plays a key role in polyadenylation-dependent pre-mRNA 3'-end formation and cooperates with cleavage factors including the CFIA complex and NAB4/CFIB. Involved in poly(A) site recognition. May be involved in coupling transcription termination and mRNA 3'-end formation. The sequence is that of Protein CFT1 (CFT1) from Saccharomyces cerevisiae (strain ATCC 204508 / S288c) (Baker's yeast).